The sequence spans 288 residues: GTP-binding protein 8 (288 aa).

Positions 109–282 constitute an EngB-type G domain; it reads HRPEVCFIGR…RCFIADITGN (174 aa). GTP contacts are provided by residues 117–124, 146–150, 164–167, 226–229, and 261–263; these read GRSNVGKS, GHTKK, DMPG, TKID, and VSA. Residues serine 124 and threonine 148 each coordinate Mg(2+).

It belongs to the TRAFAC class TrmE-Era-EngA-EngB-Septin-like GTPase superfamily. EngB GTPase family. It depends on Mg(2+) as a cofactor.

The chain is GTP-binding protein 8 (GTPBP8) from Bos taurus (Bovine).